Consider the following 418-residue polypeptide: Creatine kinase U-type, mitochondrial (418 aa).

A mitochondrion-targeting transit peptide spans 1 to 39 (MAGPFSRLLSARPGLKLLALAGAGSLAAGILLRPESVRA). The cardiolipin-binding stretch occupies residues 40-64 (ATGERRRLYPPSAEYPDLRKHNNCM). The region spanning 46-132 (RLYPPSAEYP…FDPVIQERHN (87 aa)) is the Phosphagen kinase N-terminal domain. Phosphoserine is present on Ser-152. Positions 159–401 (YVLSSRVRTG…NYLIDCERRL (243 aa)) constitute a Phosphagen kinase C-terminal domain. 162 to 166 (SSRVR) contacts ATP. A Phosphoserine modification is found at Ser-197. Residue Thr-214 is modified to Phosphothreonine. An ATP-binding site is contributed by His-225. A Phosphoserine modification is found at Ser-233. ATP-binding positions include Arg-270, Arg-326, 354 to 359 (RGTGGV), and Asp-369. Residue Thr-356 is modified to Phosphothreonine.

It belongs to the ATP:guanido phosphotransferase family. As to quaternary structure, exists as an octamer composed of four MTCK homodimers. In terms of tissue distribution, in many tissues, with highest levels in brain gut and kidney. In the kidney localized primarily in the outer medulla in the thick ascending limb and distal convoluted tubule.

Its subcellular location is the mitochondrion inner membrane. The catalysed reaction is creatine + ATP = N-phosphocreatine + ADP + H(+). Reversibly catalyzes the transfer of phosphate between ATP and various phosphogens (e.g. creatine phosphate). Creatine kinase isoenzymes play a central role in energy transduction in tissues with large, fluctuating energy demands, such as skeletal muscle, heart, brain and spermatozoa. This is Creatine kinase U-type, mitochondrial (Ckmt1) from Rattus norvegicus (Rat).